A 666-amino-acid chain; its full sequence is Vicilin-like antimicrobial peptides 2-2 (666 aa).

An N-terminal signal peptide occupies residues 1 to 27 (MAINTSNLCSLLFLLSLFLLSTTVSLA). Disordered regions lie at residues 161-191 (QQKRYEEQQREDEEKYEERMKEEDNKRDPQQ) and 221-251 (RQHGRGGDLINPQRGGSGRYEEGEEKQSDNP). The segment covering 239–251 (RYEEGEEKQSDNP) has biased composition (basic and acidic residues). Cupin type-1 domains lie at 271–410 (SVLE…ERLR) and 455–625 (YNLF…KEVE).

This sequence belongs to the 7S seed storage protein family.

It is found in the secreted. Antimicrobial peptides 2b, 2c and 2d have antibacterial and antifungal activity against a range of species. In Macadamia integrifolia (Macadamia nut), this protein is Vicilin-like antimicrobial peptides 2-2.